A 62-amino-acid chain; its full sequence is Large ribosomal subunit protein uL29 (62 aa).

Belongs to the universal ribosomal protein uL29 family.

The chain is Large ribosomal subunit protein uL29 from Enterococcus faecalis (strain ATCC 700802 / V583).